The chain runs to 114 residues: Immunomodulatory protein FIP-Fve (114 aa).

Serine 1 carries the N-acetylserine modification.

The protein belongs to the fungal immunomodulatory protein (FIP) family. In terms of assembly, homodimer.

In terms of biological role, lectin with specificity for complex cell-surface carbohydrates. Possesses immunomodulatory activity, stimulates lymphocyte mitogenesis, suppresses systemic anaphylaxis reactions and edema, enhances transcription of IL-2, IFN-gamma and TNF-alpha and hemagglutinates red blood cells. In Flammulina velutipes (Agaricus velutipes), this protein is Immunomodulatory protein FIP-Fve.